The primary structure comprises 104 residues: Large ribosomal subunit protein bL21 (104 aa).

Belongs to the bacterial ribosomal protein bL21 family. In terms of assembly, part of the 50S ribosomal subunit. Contacts protein L20.

Its function is as follows. This protein binds to 23S rRNA in the presence of protein L20. The sequence is that of Large ribosomal subunit protein bL21 from Pseudomonas putida (strain GB-1).